We begin with the raw amino-acid sequence, 249 residues long: Indole-3-glycerol phosphate synthase (249 aa).

Belongs to the TrpC family.

It carries out the reaction 1-(2-carboxyphenylamino)-1-deoxy-D-ribulose 5-phosphate + H(+) = (1S,2R)-1-C-(indol-3-yl)glycerol 3-phosphate + CO2 + H2O. It participates in amino-acid biosynthesis; L-tryptophan biosynthesis; L-tryptophan from chorismate: step 4/5. This is Indole-3-glycerol phosphate synthase from Pyrobaculum aerophilum (strain ATCC 51768 / DSM 7523 / JCM 9630 / CIP 104966 / NBRC 100827 / IM2).